The sequence spans 525 residues: GMP synthase [glutamine-hydrolyzing] (525 aa).

Positions 13 to 202 constitute a Glutamine amidotransferase type-1 domain; sequence TILVLDFGSQ…AVDLCHAKQN (190 aa). Cysteine 89 (nucleophile) is an active-site residue. Residues histidine 176 and glutamate 178 contribute to the active site. The GMPS ATP-PPase domain maps to 203–400; it reads WTMKNFIGTE…LGISHELVWR (198 aa). 231–237 contacts ATP; the sequence is SGGVDST. Residues arginine 304, aspartate 462, lysine 517, and glutamate 523 each contribute to the XMP site.

In terms of assembly, homodimer. It depends on Mg(2+) as a cofactor.

It localises to the cytoplasm. Its subcellular location is the cytosol. It catalyses the reaction XMP + L-glutamine + ATP + H2O = GMP + L-glutamate + AMP + diphosphate + 2 H(+). It functions in the pathway purine metabolism; GMP biosynthesis; GMP from XMP (L-Gln route): step 1/1. Functionally, catalyzes the conversion of xanthine monophosphate (XMP) to GMP in the presence of glutamine and ATP through an adenyl-XMP intermediate. The polypeptide is GMP synthase [glutamine-hydrolyzing] (GUA1) (Candida glabrata (strain ATCC 2001 / BCRC 20586 / JCM 3761 / NBRC 0622 / NRRL Y-65 / CBS 138) (Yeast)).